The chain runs to 295 residues: MNLEPINNALSQLRVLRSSVGQVFETLGTGVRADHGEEGKEQKFLQELQELLNSVNANLKDFESCINDLTPPQTPLTLANSAYLSLETNLERQALYPHLVQSYKWHDKLHEYSTFASTLLQQNSLKRSYYTNTKRRRSLPSSHLATPQMVENLIGSIHYNNMNLKIARPFMTNAILHITIARVLRAAVILKGLLIEWVTVKGYEESLLDGVDEQWTESRHQVFRKVQDHAHSAMLHFFSPTLPELAIRSFITWFRSYVTLFADPCKKCGKHLHNTLPPTWRDLRTLEPFHEECKQ.

The protein belongs to the Mediator complex subunit 27 family. As to quaternary structure, component of the Mediator complex.

The protein resides in the nucleus. In terms of biological role, component of the Mediator complex, a coactivator involved in the regulated transcription of nearly all RNA polymerase II-dependent genes. Mediator functions as a bridge to convey information from gene-specific regulatory proteins to the basal RNA polymerase II transcription machinery. Mediator is recruited to promoters by direct interactions with regulatory proteins and serves as a scaffold for the assembly of a functional preinitiation complex with RNA polymerase II and the general transcription factors. In Anopheles gambiae (African malaria mosquito), this protein is Mediator of RNA polymerase II transcription subunit 27 (MED27).